The following is a 416-amino-acid chain: MSEADGLRQRRPLRPQVVTDDDGQAPEAKDGSSFSGRVFRVTFLMLAVSLTVPLLGAMMLLESPIDPQPLSFKEPPLLLGVLHPNTKLRQAERLFENQLVGPESIAHIGDVMFTGTADGRVVKLENGEIETIARFGSGPCKTRDDEPVCGRPLGIRAGPNGTLFVADAYKGLFEVNPWKREVKLLLSSETPIEGKNMSFVNDLTVTQDGRKIYFTDSSSKWQRRDYLLLVMEGTDDGRLLEYDTVTREVKVLLDQLRFPNGVQLSPAEDFVLVAETTMARIRRVYVSGLMKGGADLFVENMPGFPDNIRPSSSGGYWVGMSTIRPNPGFSMLDFLSERPWIKRMIFKLFSQETVMKFVPRYSLVLELSDSGAFRRSLHDPDGLVATYISEVHEHDGHLYLGSFRSPFLCRLSLQAV.

Residues 1–32 (MSEADGLRQRRPLRPQVVTDDDGQAPEAKDGS) are disordered. Ser2 is modified (N-acetylserine). Topologically, residues 2–40 (SEADGLRQRRPLRPQVVTDDDGQAPEAKDGSSFSGRVFR) are cytoplasmic. At Thr19 the chain carries Phosphothreonine. A helical; Signal-anchor for type II membrane protein membrane pass occupies residues 41 to 61 (VTFLMLAVSLTVPLLGAMMLL). Over 62–416 (ESPIDPQPLS…FLCRLSLQAV (355 aa)) the chain is Extracellular. N-linked (GlcNAc...) asparagine glycans are attached at residues Asn160 and Asn196.

Belongs to the strictosidine synthase family. As to expression, liver, glomerular and tubular structures of the kidney, endothelial cells, arterial wall and pancreatic islets of Langerhans (at protein level). Found ubiquitously in adult as well as in embryonic tissues. In adult tissue, the highest expression is found in the liver, placenta and heart. Found on the cell surface of monocytes. In embryonic tissue, the highest expression levels is found in the liver and the kidney.

It is found in the membrane. Functionally, exhibits strong arylesterase activity with beta-naphthyl acetate and phenyl acetate. May play a role in adipocyte differentiation. The polypeptide is Adipocyte plasma membrane-associated protein (APMAP) (Homo sapiens (Human)).